The sequence spans 55 residues: Large ribosomal subunit protein bL33 (55 aa).

Belongs to the bacterial ribosomal protein bL33 family.

The protein is Large ribosomal subunit protein bL33 of Burkholderia cenocepacia (strain ATCC BAA-245 / DSM 16553 / LMG 16656 / NCTC 13227 / J2315 / CF5610) (Burkholderia cepacia (strain J2315)).